The following is a 145-amino-acid chain: 3-hydroxyacyl-[acyl-carrier-protein] dehydratase FabZ (145 aa).

His49 is a catalytic residue.

This sequence belongs to the thioester dehydratase family. FabZ subfamily.

It localises to the cytoplasm. The catalysed reaction is a (3R)-hydroxyacyl-[ACP] = a (2E)-enoyl-[ACP] + H2O. Functionally, involved in unsaturated fatty acids biosynthesis. Catalyzes the dehydration of short chain beta-hydroxyacyl-ACPs and long chain saturated and unsaturated beta-hydroxyacyl-ACPs. In Rickettsia africae (strain ESF-5), this protein is 3-hydroxyacyl-[acyl-carrier-protein] dehydratase FabZ.